The sequence spans 486 residues: 2-hydroxymuconic semialdehyde dehydrogenase (486 aa).

Residues glutamate 254 and cysteine 288 contribute to the active site.

The protein belongs to the aldehyde dehydrogenase family. As to quaternary structure, homodimer.

The enzyme catalyses (2Z,4E)-2-hydroxy-6-oxohexa-2,4-dienoate + NAD(+) + H2O = (2Z,4E)-2-hydroxyhexa-2,4-dienedioate + NADH + 2 H(+). The protein operates within aromatic compound metabolism; benzoate degradation via hydroxylation. In terms of biological role, 2-hydroxymuconic acid semialdehyde can be converted to 2-hydroxypent-2,4-dienoate either directly by the action of 2-hydroxymuconic semialdehyde hydrolase (HMSH) or by the action of three sequential enzymes, the first of which is HMSD. Can oxidize not only 2-hydroxymuconic semialdehyde and its analogs but also benzaldehyde and its analogs. The protein is 2-hydroxymuconic semialdehyde dehydrogenase (xylG) of Pseudomonas putida (Arthrobacter siderocapsulatus).